The sequence spans 59 residues: uncharacterized protein (59 aa).

The next 2 membrane-spanning stretches (helical) occupy residues 1-21 (MNMYWFLGALLYFLIGTYIFI) and 30-50 (GSWILLALAAPLIIAGYPYFY).

It localises to the cell membrane. This is an uncharacterized protein from Bacillus subtilis (strain 168).